A 547-amino-acid chain; its full sequence is MAVISLMFLAVMYVVHHPLMVSDRMDLDTLARSRQLEKRMSEEMRQLEMEFEERSRAAEQKQKVENFWRGDTSSDQLVLGKKDMGWPFQAGGQDGGPLGWILGNLWNAGLFCLFLIFELLRQSMQHEPAFESSSEEEEEEIRVVPVSSYTRLSDFPSQEALEAFYKHYIQNAIRDLPCTCEFVESFVDDLIEACRVLSRREAHPQLEDCLGFGAAFEKWGTLHETQNFDVLVPIVPPQGTMFILEMRDPALGRRCGCVKVDSECMCKHEKLLGDVLCLVHHRDHSAMLSKCTSSIKAALCTSSHLDVCKTVQWFRNMVSNAWALVAHKYDFKLTFPPSTTSCKLRLGYRSGRSLSISLVLGVQREDTLVYLVSQAPEQEQLTSVDWPESFAACEHLFLKLVGRFAPENTCHLKCLQIVLSLQDHQILPPGASRPILTSYHFKTALMHLLLRLPLTDWQHSMLSLRLQDLLWFLGRGLQQRSLHHFLIGNTYLPLTIPIPKAFRNAEPVNLFQHLVLNPVAHSQAVEEFHNLLAQVKTLPCSPVAGGL.

An N-terminal signal peptide occupies residues 1–22 (MAVISLMFLAVMYVVHHPLMVS). Topologically, residues 23-96 (DRMDLDTLAR…PFQAGGQDGG (74 aa)) are extracellular. Residues 28-66 (DTLARSRQLEKRMSEEMRQLEMEFEERSRAAEQKQKVEN) are a coiled coil. A helical transmembrane segment spans residues 97-117 (PLGWILGNLWNAGLFCLFLIF). At 118 to 547 (ELLRQSMQHE…LPCSPVAGGL (430 aa)) the chain is on the cytoplasmic side.

It belongs to the ITPRIP family.

The protein localises to the cell membrane. Functions as a ligand of CD3E, inhibiting TCR-CD3 complex signaling to regulate T cell activation. Induces stable CD3E-NCK1 binding, thereby preventing the CD3E-ZAP70 interaction and subsequently inhibiting the activation of the downstream ERK-NFkB signaling cascade and calcium influx. This chain is Inositol 1,4,5-trisphosphate receptor-interacting protein-like 1 (Itpripl1), found in Mus musculus (Mouse).